Reading from the N-terminus, the 254-residue chain is (2Z,6E)-farnesyl diphosphate synthase (254 aa).

The active site involves Asp-34. Residue Asp-34 coordinates Mg(2+). Substrate is bound by residues 35–38 (GNRR), Trp-39, His-52, and 80–82 (STD). Asn-83 serves as the catalytic Proton acceptor. Substrate contacts are provided by residues Arg-86, Arg-203, and 209–211 (RLS). Residue Glu-222 coordinates Mg(2+).

It belongs to the UPP synthase family. Z-FPP synthase subfamily. In terms of assembly, homodimer. It depends on Mg(2+) as a cofactor.

It catalyses the reaction isopentenyl diphosphate + (2E)-geranyl diphosphate = (2Z,6E)-farnesyl diphosphate + diphosphate. In terms of biological role, catalyzes the condensation of only one isopentenyl pyrophosphate (IPP) unit in the cis configuration to E-geranyl diphosphate (E-GPP) generating the 15 carbon product (2Z,6E)-farnesyl diphosphate (Z-FPP or EZ-FPP). Only geranyl diphosphate (GPP) can be used as isoprenyl acceptor. The polypeptide is (2Z,6E)-farnesyl diphosphate synthase (Thermobifida fusca (strain YX)).